Here is a 585-residue protein sequence, read N- to C-terminus: Chaperonin CPN60-like 1, mitochondrial (585 aa).

A mitochondrion-targeting transit peptide spans 1–32 (MYRLVSNVASKARIARKCTSQIGSRLNSTRNY).

The protein belongs to the chaperonin (HSP60) family.

Its subcellular location is the mitochondrion. Its function is as follows. Implicated in mitochondrial protein import and macromolecular assembly. May facilitate the correct folding of imported proteins. May also prevent misfolding and promote the refolding and proper assembly of unfolded polypeptides generated under stress conditions in the mitochondrial matrix. The sequence is that of Chaperonin CPN60-like 1, mitochondrial from Arabidopsis thaliana (Mouse-ear cress).